We begin with the raw amino-acid sequence, 197 residues long: Imidazoleglycerol-phosphate dehydratase (197 aa).

It belongs to the imidazoleglycerol-phosphate dehydratase family.

It is found in the cytoplasm. It catalyses the reaction D-erythro-1-(imidazol-4-yl)glycerol 3-phosphate = 3-(imidazol-4-yl)-2-oxopropyl phosphate + H2O. The protein operates within amino-acid biosynthesis; L-histidine biosynthesis; L-histidine from 5-phospho-alpha-D-ribose 1-diphosphate: step 6/9. This chain is Imidazoleglycerol-phosphate dehydratase, found in Thermobifida fusca (strain YX).